Consider the following 275-residue polypeptide: MEERKEEGEAEIQEHGPEHWFSKWERQCLAEAEQDEQLPPELQEEAAAAAQPEHKQQKLWHLFQNSATAVAQLYKDRVCQQPGLSLWVPFQNAATAVTNLYKESVDTHQRSFDIGIQIGYQRRNKDVLAWVKKRRRTIRREDLISFLCGKVPPPRNSRAPPRLTVVSPNRATSTETSSSVETDLQPFREAIALHGLSGAMASISVRSSTPGSPTHVSSGSNASRRRNGLHDVDLNTFISEEMALHLDNGGTRKRTSAQCGDVITDSPTHKRNRMI.

Over residues Ala32–Glu44 the composition is skewed to acidic residues. Residues Ala32–Gln51 form a disordered region. The tract at residues Gln80–Pro152 is HUWE1-binding and HAPSTR1 oligomerization (HBO) domain. 3 disordered regions span residues Arg155–Glu181, Ser204–Asn227, and Gly250–Ile275. A Phosphoserine modification is found at Ser167. The span at Thr172–Glu181 shows a compositional bias: low complexity. Residues Ser204–Val216 show a composition bias toward polar residues. Residue Ser212 is modified to Phosphoserine.

The protein belongs to the HAPSTR1 family. As to quaternary structure, homooligomer. Heterooligomer with HAPSTR2; the interaction is direct and stabilizes HAPSTR1. Interacts with HUWE1. Ubiquitinated by HUWE1. Promotes HAPSTR1 degradation through polyubiquitination.

The protein resides in the nucleus. The protein localises to the cytoplasm. Acts as a central player within a network of stress response pathways promoting cellular adaptability. The E3 ligase HUWE1 assists HAPSTR1 in controlling stress signaling and in turn, HUWE1 feeds back to promote the degradation of HAPSTR1. HAPSTR1 represents a central coordination mechanism for stress response programs. Functions as a negative regulator of TP53/P53 in the cellular response to telomere erosion and probably also DNA damage. May attenuate p53/TP53 activation through the E3 ubiquitin ligase HUWE1. This is HUWE1-associated protein modifying stress responses 1 from Homo sapiens (Human).